We begin with the raw amino-acid sequence, 369 residues long: C2 calcium-dependent domain-containing protein 4A (369 aa).

Disordered regions lie at residues 151–176 (PRAPGPATPAAPGCPRPPQDALARRP) and 197–240 (RSRR…PFPE). Positions 153–168 (APGPATPAAPGCPRPP) are enriched in pro residues. The segment covering 220 to 237 (SQSPARAPSTSPPSSRVP) has biased composition (low complexity). A C2 domain is found at 253–369 (AGDALRLAAE…ELSLGALLLL (117 aa)).

It belongs to the C2CD4 family. As to expression, specifically expressed in endothelial cells.

Its subcellular location is the nucleus. In terms of biological role, may be involved in inflammatory process. May regulate cell architecture and adhesion. This chain is C2 calcium-dependent domain-containing protein 4A (C2CD4A), found in Homo sapiens (Human).